The following is a 164-amino-acid chain: V-type proton ATPase subunit c' (164 aa).

At 1–16 (MDMVASDNVYAPLYAP) the chain is on the lumenal side. The helical transmembrane segment at 17–37 (FFGFAGCALAMILSCLGAAIG) threads the bilayer. Residues 38–59 (TAKSGIGIAGIGTFKPELIMKS) are Cytoplasmic-facing. The chain crosses the membrane as a helical span at residues 60–80 (LIPVVMSGILAIYGLVVAVLI). Over 81–98 (AGNLSPTEEYTLFNGFMH) the chain is Lumenal. The chain crosses the membrane as a helical span at residues 99–119 (LSCGLCVGFACLSSGYAIGIV). The Cytoplasmic segment spans residues 120–136 (GDVGVRKYMHQPRLFVG). Residues 137-157 (IVLILIFSEVLGLYGMIIALI) form a helical membrane-spanning segment. Over 158–164 (LNTKGSE) the chain is Lumenal.

This sequence belongs to the V-ATPase proteolipid subunit family. In terms of assembly, V-ATPase is a heteromultimeric enzyme composed of a peripheral catalytic V1 complex (components A to H) attached to an integral membrane V0 proton pore complex (components: a, c, c', c'', d, e, f and VOA1). The decameric c-ring forms the proton-conducting pore, and is composed of eight proteolipid subunits c, one subunit c' and one subunit c''.

It localises to the vacuole membrane. Proton-conducting pore forming subunit of the V0 complex of vacuolar(H+)-ATPase (V-ATPase), a multisubunit enzyme composed of a peripheral complex (V1) that hydrolyzes ATP and a membrane integral complex (V0) that translocates protons. V-ATPase is responsible for acidifying and maintaining the pH of intracellular compartments. This chain is V-type proton ATPase subunit c' (VMA11), found in Candida glabrata (strain ATCC 2001 / BCRC 20586 / JCM 3761 / NBRC 0622 / NRRL Y-65 / CBS 138) (Yeast).